The following is a 293-amino-acid chain: Cell wall protein PGA31 (293 aa).

Positions 1-18 (MKFLTAASLLTLSSSALA) are cleaved as a signal peptide. Residue Asn-131 is glycosylated (N-linked (GlcNAc...) asparagine). The tract at residues 161 to 187 (ESASSSSSSAAPEPTASSSEAPKETPV) is disordered. The segment covering 163 to 180 (ASSSSSSAAPEPTASSSE) has biased composition (low complexity). Asn-190 carries N-linked (GlcNAc...) asparagine glycosylation. A disordered region spans residues 233 to 262 (VPSKTASSEAAPPKTTVDSVSKPAPSGKKP). Gly-271 carries GPI-anchor amidated glycine lipidation. Residues 272 to 293 (AANALTGGSVAIAVAAAIGLVF) constitute a propeptide, removed in mature form.

The protein belongs to the SRP1/TIP1 family. In terms of processing, the GPI-anchor is attached to the protein in the endoplasmic reticulum and serves to target the protein to the cell surface. There, the glucosamine-inositol phospholipid moiety is cleaved off and the GPI-modified mannoprotein is covalently attached via its lipidless GPI glycan remnant to the 1,6-beta-glucan of the outer cell wall layer.

The protein localises to the secreted. The protein resides in the cell wall. Its subcellular location is the membrane. In terms of biological role, component of the cell wall involved in virulence which plays a role in the relationship between C.albicans and the host. Involved in the regulation or assembly of chitin within the cell wall. The polypeptide is Cell wall protein PGA31 (PGA31) (Candida albicans (strain SC5314 / ATCC MYA-2876) (Yeast)).